The sequence spans 341 residues: Bis(monoacylglycero)phosphate synthase CLN5 (341 aa).

The Cytoplasmic portion of the chain corresponds to 1-13 (MLRGGPCGAHWRP). Residues 14-30 (ALALALLGLATILGASP) form a helical; Signal-anchor for type II membrane protein membrane-spanning segment. Topologically, residues 31–341 (TSGQRWPVPY…PTRHTTFTDL (311 aa)) are lumenal. 2 cysteine pairs are disulfide-bonded: cysteine 53–cysteine 142 and cysteine 60–cysteine 148. The active-site Proton acceptor is histidine 100. 4 N-linked (GlcNAc...) asparagine glycosylation sites follow: asparagine 113, asparagine 126, asparagine 161, and asparagine 186. Cysteine 214 (nucleophile; Acyl-thioester intermediate) is an active-site residue. Asparagine 238, asparagine 254, and asparagine 264 each carry an N-linked (GlcNAc...) asparagine glycan. Positions 287 to 326 (FLMNFLKIFDTVIIHRQFYLFYNFEYWFLPMKPPFVKITY) are membrane-anchoring.

This sequence belongs to the CLN5 family. In terms of assembly, multimer. Interacts with PPT1, TPP1, CLN3, CLN6, CLN8, ATP5F1A and ATP5F1B. Interacts with SORT1, RAB5A and RAB7A. In terms of processing, N-glycosylated with both high mannose and complex type sugars. Glycosylation is important for proper folding and trafficking to the lysosomes. The type II membrane signal anchor is proteolytically cleaved to produce a mature form that is transported to the lysosomes (Bis(monoacylglycero)phosphate synthase CLN5, secreted form). Post-translationally, can undergo proteolytic cleavage at the C-terminus, probably by a cysteine protease and may involve the removal of approximately 10-15 residues from the C-terminal end. In terms of tissue distribution, heart, kidney, liver, spleen, muscle and rectum (at protein level).

The protein resides in the lysosome. It localises to the membrane. It catalyses the reaction S-hexadecanoyl-L-cysteinyl-[protein] + H2O = L-cysteinyl-[protein] + hexadecanoate + H(+). It carries out the reaction 2 1-acyl-sn-glycero-3-phospho-(1'-sn-glycerol) = 1-acyl-sn-glycero-3-phospho-(3'-acyl-sn-1'-glycerol) + sn-glycero-3-phospho-(1'-sn-glycerol). The enzyme catalyses 2 1-(9Z-octadecenoyl)-sn-glycero-3-phospho-(1'-sn-glycerol) = 1-(9Z-octadecenoyl)-sn-glycero-3-phospho-(3'-(9Z-octadecenoyl)-1'-sn-glycerol) + sn-glycero-3-phospho-(1'-sn-glycerol). The catalysed reaction is 2 1-octadecanoyl-sn-glycero-3-phospho-(1'-sn-glycerol) = 1-octadecanoyl-sn-glycero-3-phospho-(3'-octadecanoyl-1'-sn-glycerol) + sn-glycero-3-phospho-(1'-sn-glycerol). It catalyses the reaction 2 1-hexadecanoyl-sn-glycero-3-phospho-(1'-sn-glycerol) = 1-hexadecanoyl-sn-glycero-3-phospho-(3'-hexadecanoyl-1'-sn-glycerol) + sn-glycero-3-phospho-(1'-sn-glycerol). It carries out the reaction 2 1-tetradecanoyl-sn-glycero-3-phospho-(1'-sn-glycerol) = 1-tetradecanoyl-sn-glycero-3-phospho-(3'-tetradecanoyl-1'-sn-glycerol) + sn-glycero-3-phospho-(1'-sn-glycerol). Functionally, catalyzes the synthesis of bis(monoacylglycero)phosphate (BMP) via transacylation of 2 molecules of lysophosphatidylglycerol (LPG). BMP also known as lysobisphosphatidic acid plays a key role in the formation of intraluminal vesicles and in maintaining intracellular cholesterol homeostasis. Can use only LPG as the exclusive lysophospholipid acyl donor for base exchange and displays BMP synthase activity towards various LPGs (LPG 14:0, LPG 16:0, LPG 18:0, LPG 18:1) with a higher preference for longer chain lengths. Plays a role in influencing the retrograde trafficking of lysosomal sorting receptors SORT1 and IGF2R from the endosomes to the trans-Golgi network by controlling the recruitment of retromer complex to the endosomal membrane. Regulates the localization and activation of RAB7A which is required to recruit the retromer complex to the endosomal membrane. Its function is as follows. Exhibits palmitoyl protein thioesterase (S-depalmitoylation) activity in vitro and most likely plays a role in protein S-depalmitoylation. The polypeptide is Bis(monoacylglycero)phosphate synthase CLN5 (Cln5) (Mus musculus (Mouse)).